Consider the following 91-residue polypeptide: Probable Fe(2+)-trafficking protein (91 aa).

The protein belongs to the Fe(2+)-trafficking protein family.

Functionally, could be a mediator in iron transactions between iron acquisition and iron-requiring processes, such as synthesis and/or repair of Fe-S clusters in biosynthetic enzymes. The polypeptide is Probable Fe(2+)-trafficking protein (Burkholderia thailandensis (strain ATCC 700388 / DSM 13276 / CCUG 48851 / CIP 106301 / E264)).